A 265-amino-acid polypeptide reads, in one-letter code: Sulfur carrier protein FdhD (265 aa).

Cysteine 107 serves as the catalytic Cysteine persulfide intermediate.

This sequence belongs to the FdhD family.

It is found in the cytoplasm. Its function is as follows. Required for formate dehydrogenase (FDH) activity. Acts as a sulfur carrier protein that transfers sulfur from IscS to the molybdenum cofactor prior to its insertion into FDH. The chain is Sulfur carrier protein FdhD from Staphylococcus aureus (strain MRSA252).